A 125-amino-acid polypeptide reads, in one-letter code: Small ribosomal subunit protein uS12 (125 aa).

Aspartate 89 bears the 3-methylthioaspartic acid mark. The disordered stretch occupies residues 106–125; sequence GVKDRKQSRSKYGAKRPKKA. Basic residues predominate over residues 113-125; sequence SRSKYGAKRPKKA.

The protein belongs to the universal ribosomal protein uS12 family. In terms of assembly, part of the 30S ribosomal subunit. Contacts proteins S8 and S17. May interact with IF1 in the 30S initiation complex.

In terms of biological role, with S4 and S5 plays an important role in translational accuracy. Its function is as follows. Interacts with and stabilizes bases of the 16S rRNA that are involved in tRNA selection in the A site and with the mRNA backbone. Located at the interface of the 30S and 50S subunits, it traverses the body of the 30S subunit contacting proteins on the other side and probably holding the rRNA structure together. The combined cluster of proteins S8, S12 and S17 appears to hold together the shoulder and platform of the 30S subunit. The chain is Small ribosomal subunit protein uS12 from Azoarcus sp. (strain BH72).